We begin with the raw amino-acid sequence, 200 residues long: Oligoribonuclease (200 aa).

Residues 5-169 (MVWIDCEMTG…ADIRESIAEL (165 aa)) enclose the Exonuclease domain. The active site involves tyrosine 126.

This sequence belongs to the oligoribonuclease family.

Its subcellular location is the cytoplasm. Functionally, 3'-to-5' exoribonuclease specific for small oligoribonucleotides. This is Oligoribonuclease from Streptomyces coelicolor (strain ATCC BAA-471 / A3(2) / M145).